The sequence spans 526 residues: Peptide chain release factor 3 (526 aa).

In terms of domain architecture, tr-type G spans Asp-9–Leu-277. GTP is bound by residues Ser-18–Thr-25, Asp-86–His-90, and Asn-140–Asp-143.

This sequence belongs to the TRAFAC class translation factor GTPase superfamily. Classic translation factor GTPase family. PrfC subfamily.

It localises to the cytoplasm. In terms of biological role, increases the formation of ribosomal termination complexes and stimulates activities of RF-1 and RF-2. It binds guanine nucleotides and has strong preference for UGA stop codons. It may interact directly with the ribosome. The stimulation of RF-1 and RF-2 is significantly reduced by GTP and GDP, but not by GMP. In Shewanella baltica (strain OS155 / ATCC BAA-1091), this protein is Peptide chain release factor 3.